The chain runs to 204 residues: Tumor protein D53 (204 aa).

The segment at 1-20 (MEAQAQGLLETEPLQGTDED) is disordered. The stretch at 22–73 (VASADFSSMLSEEEKEELKAELVQLEDEITTLRQVLSAKERHLVEIKQKLGM) forms a coiled coil. A phosphoserine mark is found at Ser-29, Ser-86, Ser-122, and Ser-131. Residue Arg-133 is modified to Omega-N-methylarginine. Thr-146 carries the phosphothreonine modification. 2 positions are modified to phosphoserine: Ser-149 and Ser-174.

It belongs to the TPD52 family. As to quaternary structure, forms a homodimer or heterodimer with other members of the family.

This chain is Tumor protein D53 (TPD52L1), found in Homo sapiens (Human).